Consider the following 65-residue polypeptide: Movement protein TGBp3 (65 aa).

The Lumenal segment spans residues 1–3 (MQA). Residues 4–24 (SGLILVALFSAVVSYLALLHL) traverse the membrane as a helical segment. The Cytoplasmic portion of the chain corresponds to 25-65 (SSSSSSCVVVVTGESFRISGCDFTEEFIGFAKTLRVANSQP).

The protein belongs to the Tymovirales TGBp3 protein family.

The protein resides in the host endoplasmic reticulum membrane. Functionally, plays a role in viral cell-to-cell propagation, by facilitating genome transport to neighboring plant cells through plasmosdesmata. May induce the formation of granular vesicles derived from the Endoplasmic reticulum, which align on actin filaments. The sequence is that of Movement protein TGBp3 from Carnation latent virus (CLV).